Consider the following 123-residue polypeptide: Guanine nucleotide exchange factor MSS4 (123 aa).

Position 1 is an N-acetylmethionine (methionine 1). The MSS4 domain maps to 9-123; sequence ELVSAEGRNR…YVALERVSHE (115 aa). Zn(2+) is bound by residues cysteine 23, cysteine 26, cysteine 94, and cysteine 97.

This sequence belongs to the DSS4/MSS4 family. Interacts with RAB8A. Ubiquitous.

Its function is as follows. Guanine-nucleotide-releasing protein that acts on members of the SEC4/YPT1/RAB subfamily. Stimulates GDP release from both YPT1, RAB3A and RAB10, but is less active on these proteins than on the SEC4 protein. Might play a general role in vesicular transport. The sequence is that of Guanine nucleotide exchange factor MSS4 (Rabif) from Rattus norvegicus (Rat).